The primary structure comprises 101 residues: Small ribosomal subunit protein uS10 (101 aa).

It belongs to the universal ribosomal protein uS10 family. As to quaternary structure, part of the 30S ribosomal subunit.

Functionally, involved in the binding of tRNA to the ribosomes. This is Small ribosomal subunit protein uS10 from Brachyspira pilosicoli (Serpulina pilosicoli).